We begin with the raw amino-acid sequence, 711 residues long: MND1-interacting protein 1 (711 aa).

Residues 390-648 (EWAQKNAMQA…LEGSYDNEAN (259 aa)) are a coiled coil. Disordered regions lie at residues 552–571 (EALA…EGHN) and 602–622 (RLKA…WKPK). The span at 602–611 (RLKASSDSDS) shows a compositional bias: basic and acidic residues. An RING-type zinc finger spans residues 653–697 (CIICMKDEVSVVFLPCAHQVVCGSCSDSFFASNNGGSKVTCPCCR).

In terms of assembly, interacts (via C-terminal domain) with MND1 and HOP2. Interacts with XRI1 (via C-terminal domain).

The chain is MND1-interacting protein 1 (MIP1) from Arabidopsis thaliana (Mouse-ear cress).